Consider the following 359-residue polypeptide: Insulin gene enhancer protein ISL-2 (359 aa).

LIM zinc-binding domains are found at residues 25–86 (AMCV…RLFG) and 87–149 (IKCA…LLER). The tract at residues 151–190 (AAGSPRSPGPLPGARGLHLPDAGSGRQPSLRTHVHKQAEK) is disordered. 2 positions are modified to phosphoserine: S154 and S157. The segment at residues 191 to 250 (TTRVRTVLNEKQLHTLRTCYAANPRPDALMKEQLVEMTGLSPRVIRVWFQNKRCKDKKKS) is a DNA-binding region (homeobox). Positions 272 to 301 (GTPLVAGSPIRHENAVQGSAVEVQTYQPPW) are LIM-binding domain (LID). At S279 the chain carries Phosphoserine. Residues 326–336 (ESGSLGNSSGS) show a composition bias toward low complexity. Residues 326-359 (ESGSLGNSSGSDVTSLSSQLPDTPNSMVPSPVET) are disordered. Residues 337-359 (DVTSLSSQLPDTPNSMVPSPVET) show a composition bias toward polar residues.

As to quaternary structure, interacts with LHX4.

It localises to the nucleus. In terms of biological role, transcriptional factor that defines subclasses of motoneurons that segregate into columns in the spinal cord and select distinct axon pathways. This Mus musculus (Mouse) protein is Insulin gene enhancer protein ISL-2 (Isl2).